The following is a 510-amino-acid chain: DAP3-binding cell death enhancer 1 (510 aa).

Residues 1-23 (MWRLTGILGRALPRLLGPGFRGI) constitute a mitochondrion transit peptide. 2 disordered regions span residues 19–61 (GFRG…SRDP) and 142–185 (VLPR…SGLL). Residues 24–101 (TPKPTSSDGS…AVLALHLARQ (78 aa)) constitute a propeptide, extended MTS. Positions 35-45 (TTSPTLPLTRL) are enriched in low complexity. Composition is skewed to basic and acidic residues over residues 46–61 (SFDR…SRDP) and 155–167 (GLRE…EDHP). The span at 169 to 181 (APSQCLPSDSSLR) shows a compositional bias: polar residues. TPR repeat units follow at residues 213 to 245 (AHPP…QLSV), 246 to 278 (AITF…RGYS), 279 to 313 (KAQY…VQGH), 314 to 351 (SLAQ…DSGL), 352 to 385 (TEAQ…SNGD), 386 to 423 (SQSR…GNEP), and 471 to 499 (ASST…TIPS). The SIFI-degron motif lies at 307–326 (LAAVQGHSLAQYRYARCLLQ).

It belongs to the DELE1 family. Interacts with DAP3. As to quaternary structure, interacts (via TPR repeats) with EIF2AK1/HRI; activating the protein kinase activity of EIF2AK1/HRI, thereby promoting the integrated stress response (ISR). In terms of assembly, homooctamer; oligomerization is required to activate EIF2AK1/HRI. Interacts (via TPR repeats) with EIF2AK1/HRI; activating the protein kinase activity of EIF2AK1/HRI, thereby promoting the integrated stress response (ISR). Post-translationally, unstable protein in absence of stress: imported in the mitochondrial matrix following processing by the mitochondrial-processing peptidase (MPP), where it is degraded by LONP1. Stabilized in response to iron deficiency: iron deficiency impairs mitochondrial import, promoting localization at the mitochondrial surface and stabilization. Cleaved by OMA1 in response to mitochondrial stress, generating the DAP3-binding cell death enhancer 1 short form (DELE1(S) or S-DELE1) that accumulates in the cytosol and activates the protein kinase activity of EIF2AK1/HRI. Protein cleavage by OMA1 can take place at different positions, and apparently does not require a specific sequence motif. In terms of processing, ubiquitinated and degraded by the SIFI complex once the mitochondrial stress has been resolved, thereby providing stress response silencing. Within the SIFI complex, UBR4 initiates ubiquitin chain that are further elongated or branched by KCMF1.

The protein resides in the mitochondrion. Its subcellular location is the mitochondrion outer membrane. It localises to the mitochondrion inner membrane. The protein localises to the cytoplasm. It is found in the cytosol. In terms of biological role, protein kinase activator that acts as a key activator of the integrated stress response (ISR) following various stresses, such as iron deficiency, mitochondrial stress or mitochondrial DNA breaks. Detects impaired protein import and processing in mitochondria, activating the ISR. May also required for the induction of death receptor-mediated apoptosis through the regulation of caspase activation. Functionally, protein kinase activator that activates the ISR in response to iron deficiency: iron deficiency impairs mitochondrial import, promoting DELE1 localization at the mitochondrial surface, where it binds and activates EIF2AK1/HRI to trigger the ISR. Its function is as follows. Protein kinase activator generated by protein cleavage in response to mitochondrial stress, which accumulates in the cytosol and specifically binds to and activates the protein kinase activity of EIF2AK1/HRI. It thereby activates the integrated stress response (ISR): EIF2AK1/HRI activation promotes eIF-2-alpha (EIF2S1) phosphorylation, leading to a decrease in global protein synthesis and the induction of selected genes, including the transcription factor ATF4, the master transcriptional regulator of the ISR. Also acts as an activator of PRKN-independent mitophagy: activates the protein kinase activity of EIF2AK1/HRI in response to mitochondrial damage, promoting eIF-2-alpha (EIF2S1) phosphorylation, leading to mitochondrial localization of EIF2S1 followed by induction of mitophagy. The chain is DAP3-binding cell death enhancer 1 from Mus musculus (Mouse).